The following is a 451-amino-acid chain: ADP-specific phosphofructokinase (451 aa).

An ADPK domain is found at 1–450 (MSVPQDVSIF…FITYVNYLKR (450 aa)). Residues Glu-261, Glu-291, and Asp-434 each coordinate Mg(2+). The active-site Proton acceptor is Asp-434.

It belongs to the carbohydrate kinase PfkC family. It depends on Mg(2+) as a cofactor.

It is found in the cytoplasm. The enzyme catalyses beta-D-fructose 6-phosphate + ADP = beta-D-fructose 1,6-bisphosphate + AMP + H(+). The protein operates within carbohydrate degradation; glycolysis. Catalyzes the phosphorylation of fructose 6-phosphate to fructose 1,6-bisphosphate using ADP as the phosphate donor. This is ADP-specific phosphofructokinase from Pyrococcus abyssi (strain GE5 / Orsay).